The primary structure comprises 280 residues: Dopamine receptor-interacting protein 1 (280 aa).

Interacts with DRD1, the dopamine D1 receptor.

Its function is as follows. Could be a regulator of the dopamine receptor signaling pathway. This is Dopamine receptor-interacting protein 1 (DORIP1) from Bos taurus (Bovine).